Reading from the N-terminus, the 142-residue chain is Large ribosomal subunit protein bL17 (142 aa).

Belongs to the bacterial ribosomal protein bL17 family. In terms of assembly, part of the 50S ribosomal subunit. Contacts protein L32.

This Chlamydia abortus (strain DSM 27085 / S26/3) (Chlamydophila abortus) protein is Large ribosomal subunit protein bL17.